We begin with the raw amino-acid sequence, 303 residues long: Pyridoxal 5'-phosphate synthase subunit PdxS (303 aa).

Residue Asp33 participates in D-ribose 5-phosphate binding. The active-site Schiff-base intermediate with D-ribose 5-phosphate is the Lys90. Gly162 lines the D-ribose 5-phosphate pocket. Residue Arg174 participates in D-glyceraldehyde 3-phosphate binding. Residues Gly223 and 244 to 245 (GS) contribute to the D-ribose 5-phosphate site.

This sequence belongs to the PdxS/SNZ family. As to quaternary structure, in the presence of PdxT, forms a dodecamer of heterodimers.

It catalyses the reaction aldehydo-D-ribose 5-phosphate + D-glyceraldehyde 3-phosphate + L-glutamine = pyridoxal 5'-phosphate + L-glutamate + phosphate + 3 H2O + H(+). The protein operates within cofactor biosynthesis; pyridoxal 5'-phosphate biosynthesis. Catalyzes the formation of pyridoxal 5'-phosphate from ribose 5-phosphate (RBP), glyceraldehyde 3-phosphate (G3P) and ammonia. The ammonia is provided by the PdxT subunit. Can also use ribulose 5-phosphate and dihydroxyacetone phosphate as substrates, resulting from enzyme-catalyzed isomerization of RBP and G3P, respectively. In Mycobacterium avium (strain 104), this protein is Pyridoxal 5'-phosphate synthase subunit PdxS.